The following is an 87-amino-acid chain: Beta-toxin CsE3 (87 aa).

The N-terminal stretch at 1-19 (MNSLLIIAACLALIGTVWA) is a signal peptide. The LCN-type CS-alpha/beta domain maps to 20–85 (KEGYIVNYHT…VWPLPKKKCN (66 aa)). Cystine bridges form between Cys31–Cys84, Cys35–Cys60, Cys44–Cys65, and Cys48–Cys67. Residue Asn85 is modified to Asparagine amide.

This sequence belongs to the long (4 C-C) scorpion toxin superfamily. Sodium channel inhibitor family. Beta subfamily. In terms of tissue distribution, expressed by the venom gland.

The protein resides in the secreted. Beta toxins bind voltage-independently at site-4 of sodium channels (Nav) and shift the voltage of activation toward more negative potentials thereby affecting sodium channel activation and promoting spontaneous and repetitive firing. The chain is Beta-toxin CsE3 from Centruroides sculpturatus (Arizona bark scorpion).